The primary structure comprises 137 residues: Ribosome-binding factor A (137 aa).

The segment at 114–137 is disordered; the sequence is QLIDEARAEDRELRPEDDETGNNE. A compositionally biased stretch (basic and acidic residues) spans 117–127; the sequence is DEARAEDRELR. Over residues 128–137 the composition is skewed to acidic residues; sequence PEDDETGNNE.

This sequence belongs to the RbfA family. As to quaternary structure, monomer. Binds 30S ribosomal subunits, but not 50S ribosomal subunits or 70S ribosomes.

Its subcellular location is the cytoplasm. Functionally, one of several proteins that assist in the late maturation steps of the functional core of the 30S ribosomal subunit. Associates with free 30S ribosomal subunits (but not with 30S subunits that are part of 70S ribosomes or polysomes). Required for efficient processing of 16S rRNA. May interact with the 5'-terminal helix region of 16S rRNA. The chain is Ribosome-binding factor A from Alcanivorax borkumensis (strain ATCC 700651 / DSM 11573 / NCIMB 13689 / SK2).